The chain runs to 90 residues: Small ribosomal subunit protein uS15 (90 aa).

Belongs to the universal ribosomal protein uS15 family. As to quaternary structure, part of the 30S ribosomal subunit. Forms a bridge to the 50S subunit in the 70S ribosome, contacting the 23S rRNA.

Functionally, one of the primary rRNA binding proteins, it binds directly to 16S rRNA where it helps nucleate assembly of the platform of the 30S subunit by binding and bridging several RNA helices of the 16S rRNA. Forms an intersubunit bridge (bridge B4) with the 23S rRNA of the 50S subunit in the ribosome. The chain is Small ribosomal subunit protein uS15 from Wolbachia pipientis wMel.